Here is a 1121-residue protein sequence, read N- to C-terminus: uncharacterized protein (1121 aa).

The interval 179–198 (GPGECQSVHNQSSGSGSNSY) is disordered. N188, N325, N351, N449, N561, and N615 each carry an N-linked (GlcNAc...) asparagine; by host glycan. Disordered stretches follow at residues 649-684 (KRIHSQNENPEDGQVREGGCSDVRNEPPRKSARIHN) and 701-734 (STRQDASGGSSSGTKNEYYDDESELTGLSDTDSD). The span at 701–715 (STRQDASGGSSSGTK) shows a compositional bias: polar residues. Residues N838, N911, N914, and N980 are each glycosylated (N-linked (GlcNAc...) asparagine; by host).

The protein belongs to the herpesviridae US22 family.

This is an uncharacterized protein from Homo sapiens (Human).